We begin with the raw amino-acid sequence, 239 residues long: Carboxy-S-adenosyl-L-methionine synthase (239 aa).

Residues tyrosine 35, 64–66 (GSS), 114–115 (DL), asparagine 129, and arginine 196 contribute to the S-adenosyl-L-methionine site.

Belongs to the class I-like SAM-binding methyltransferase superfamily. Cx-SAM synthase family. In terms of assembly, homodimer.

It carries out the reaction prephenate + S-adenosyl-L-methionine = carboxy-S-adenosyl-L-methionine + 3-phenylpyruvate + H2O. Functionally, catalyzes the conversion of S-adenosyl-L-methionine (SAM) to carboxy-S-adenosyl-L-methionine (Cx-SAM). In Helicobacter hepaticus (strain ATCC 51449 / 3B1), this protein is Carboxy-S-adenosyl-L-methionine synthase.